A 442-amino-acid polypeptide reads, in one-letter code: Pentatricopeptide repeat-containing protein At2g27800, mitochondrial (442 aa).

Residues 1–67 (MSATRSTFLG…SFLPSIHVRF (67 aa)) constitute a mitochondrion transit peptide. PPR repeat units lie at residues 206–236 (NENLYNSIIFYFTKAGKLIRAVNIFRHMVTS), 244–286 (TIRT…GIEP), 287–322 (DVFALNCLVKGYVLSLHVNDALRIFHQMSVVYDCEP), 323–357 (NSFTYDYLIHGLCAQGRTINARELLSEMKGKGFVP), 358–392 (NGKSYNSLVNAFALSGEIDDAVKCLWEMIENGRVV), and 393–427 (DFISYRTLVDESCRKGKYDEATRLLEMLREKQLVD).

This sequence belongs to the PPR family. P subfamily.

The protein localises to the mitochondrion. This Arabidopsis thaliana (Mouse-ear cress) protein is Pentatricopeptide repeat-containing protein At2g27800, mitochondrial.